A 352-amino-acid chain; its full sequence is Selenide, water dikinase (352 aa).

Residue Cys23 is part of the active site. Residues Lys26 and 54-56 each bind ATP; that span reads SRD. Asp57 provides a ligand contact to Mg(2+). ATP is bound by residues Asp74, Asp97, and 145–147; that span reads GHS. Asp97 serves as a coordination point for Mg(2+). Asp233 serves as a coordination point for Mg(2+).

The protein belongs to the selenophosphate synthase 1 family. Class I subfamily. Homodimer. It depends on Mg(2+) as a cofactor.

The catalysed reaction is hydrogenselenide + ATP + H2O = selenophosphate + AMP + phosphate + 2 H(+). Its function is as follows. Synthesizes selenophosphate from selenide and ATP. This chain is Selenide, water dikinase, found in Shewanella baltica (strain OS155 / ATCC BAA-1091).